A 68-amino-acid chain; its full sequence is Protein SlyX homolog (68 aa).

Belongs to the SlyX family.

This Pseudomonas entomophila (strain L48) protein is Protein SlyX homolog.